We begin with the raw amino-acid sequence, 278 residues long: Cation-dependent mannose-6-phosphate receptor (278 aa).

A signal peptide spans 1 to 21 (MFPLSGCWRTELLLLLLLAVA). The Lumenal segment spans residues 22–188 (VRESWQIEEK…ACSPEVSHLS (167 aa)). The region spanning 31–182 (KSCDLVGEKD…EMDSSLACSP (152 aa)) is the MRH domain. C33 and C79 are oxidised to a cystine. 5 N-linked (GlcNAc...) asparagine glycosylation sites follow: N58, N84, N95, N108, and N114. Disulfide bonds link C133-C168 and C146-C180. A helical membrane pass occupies residues 189-209 (VGSILLVIFASLVAVYIIGGF). The Cytoplasmic portion of the chain corresponds to 210–278 (LYQRLVVGAK…EERDDHLLPM (69 aa)). Residues 256–278 (YRGVGDDQLGEESEERDDHLLPM) are disordered. The residue at position 268 (S268) is a Phosphoserine.

Homodimer. Binds GGA1, GGA2 and GGA3.

Its subcellular location is the lysosome membrane. In terms of biological role, transport of phosphorylated lysosomal enzymes from the Golgi complex and the cell surface to lysosomes. Lysosomal enzymes bearing phosphomannosyl residues bind specifically to mannose-6-phosphate receptors in the Golgi apparatus and the resulting receptor-ligand complex is transported to an acidic prelyosomal compartment where the low pH mediates the dissociation of the complex. The chain is Cation-dependent mannose-6-phosphate receptor (M6pr) from Rattus norvegicus (Rat).